The following is a 296-amino-acid chain: Small ribosomal subunit biogenesis GTPase RsgA (296 aa).

The CP-type G domain occupies R63–Y224. GTP-binding positions include S112–D115 and G167–T175. C248, C253, H255, and C261 together coordinate Zn(2+).

It belongs to the TRAFAC class YlqF/YawG GTPase family. RsgA subfamily. In terms of assembly, monomer. Associates with 30S ribosomal subunit, binds 16S rRNA. Zn(2+) is required as a cofactor.

The protein localises to the cytoplasm. Its function is as follows. One of several proteins that assist in the late maturation steps of the functional core of the 30S ribosomal subunit. Helps release RbfA from mature subunits. May play a role in the assembly of ribosomal proteins into the subunit. Circularly permuted GTPase that catalyzes slow GTP hydrolysis, GTPase activity is stimulated by the 30S ribosomal subunit. The chain is Small ribosomal subunit biogenesis GTPase RsgA from Limosilactobacillus reuteri (strain DSM 20016) (Lactobacillus reuteri).